Here is a 563-residue protein sequence, read N- to C-terminus: Tripeptidyl-peptidase 1 (563 aa).

The N-terminal stretch at 1-19 (MGLQARFLGLLALVIAGKC) is a signal peptide. Positions 20–195 (THSPEPDQRW…PEPQGVGPVG (176 aa)) are cleaved as a propeptide — removed in mature form. Cys111 and Cys122 are joined by a disulfide. The 365-residue stretch at 199-563 (GVTPSVLRQR…PALLKTLLNP (365 aa)) folds into the Peptidase S53 domain. Residues Asn210 and Asn222 are each glycosylated (N-linked (GlcNAc...) asparagine). Residues Glu272 and Asp276 each act as charge relay system in the active site. N-linked (GlcNAc...) asparagine glycosylation is found at Asn286, Asn313, and Asn443. Intrachain disulfides connect Cys365-Cys526 and Cys522-Cys537. Ser475 functions as the Charge relay system in the catalytic mechanism. Ca(2+) is bound by residues Asp517 and Val518. The Ca(2+) site is built by Gly539, Gly541, and Asp543.

In terms of assembly, monomer. Interacts with CLN5. Interacts with CLN3. It depends on Ca(2+) as a cofactor. Post-translationally, activated by autocatalytic proteolytical processing upon acidification. N-glycosylation is required for processing and activity.

Its subcellular location is the lysosome. It is found in the melanosome. The enzyme catalyses Release of an N-terminal tripeptide from a polypeptide, but also has endopeptidase activity.. Its function is as follows. Lysosomal serine protease with tripeptidyl-peptidase I activity. May act as a non-specific lysosomal peptidase which generates tripeptides from the breakdown products produced by lysosomal proteinases. Requires substrates with an unsubstituted N-terminus. This Rattus norvegicus (Rat) protein is Tripeptidyl-peptidase 1 (Tpp1).